The chain runs to 86 residues: Large ribosomal subunit protein uL23 (86 aa).

This sequence belongs to the universal ribosomal protein uL23 family. As to quaternary structure, part of the 50S ribosomal subunit. Contacts protein L29.

In terms of biological role, binds to 23S rRNA. One of the proteins that surrounds the polypeptide exit tunnel on the outside of the ribosome. The polypeptide is Large ribosomal subunit protein uL23 (Methanothermobacter thermautotrophicus (strain ATCC 29096 / DSM 1053 / JCM 10044 / NBRC 100330 / Delta H) (Methanobacterium thermoautotrophicum)).